The primary structure comprises 537 residues: ATP-dependent 6-phosphofructokinase 5, chloroplastic (537 aa).

Residues 1–52 (MDALSQAISSGISVPYKNNSSSLVPSHGLTSLILRKSRSPVNPSSRSRVSVR) constitute a chloroplast transit peptide. The interval 35–64 (RKSRSPVNPSSRSRVSVRASEIQHSKTSAS) is disordered. Positions 39–54 (SPVNPSSRSRVSVRAS) are enriched in low complexity. Ser147 carries the post-translational modification Phosphoserine. ATP is bound by residues Gly189, 253 to 254 (RG), and 278 to 281 (GNGT). Asn279 contributes to the Mg(2+) binding site. Substrate is bound by residues 307-309 (TID), 352-354 (MGR), Glu408, and 460-463 (YMIR). Asp309 serves as the catalytic Proton acceptor.

The protein belongs to the phosphofructokinase type A (PFKA) family. PPi-dependent PFK group II subfamily. Atypical ATP-dependent clade 'X' sub-subfamily. In terms of assembly, homotetramer. The cofactor is Mg(2+). Expressed in roots, leaves, stems and flowers.

Its subcellular location is the plastid. It is found in the chloroplast. The enzyme catalyses beta-D-fructose 6-phosphate + ATP = beta-D-fructose 1,6-bisphosphate + ADP + H(+). It functions in the pathway carbohydrate degradation; glycolysis; D-glyceraldehyde 3-phosphate and glycerone phosphate from D-glucose: step 3/4. Allosterically activated by AMP. Functionally, catalyzes the phosphorylation of D-fructose 6-phosphate to fructose 1,6-bisphosphate by ATP, the first committing step of glycolysis. This chain is ATP-dependent 6-phosphofructokinase 5, chloroplastic, found in Arabidopsis thaliana (Mouse-ear cress).